Consider the following 459-residue polypeptide: MNRLPSSASALACSAHALNLIEKRTLNHEEMKALNREVIDYFKEHVNPGFLEYRKSVTAGGDYGAVEWQAGSLNTLVDTQGQEFIDCLGGFGIFNVGHRNPVVVSAVQNQLAKQPLHSQELLDPLRAMLAKTLAALTPGKLKYSFFCNSGTESVEAALKLAKAYQSPRGKFTFIATSGAFHGKSLGALSATAKSTFRRPFMPLLPGFRHVPFGNIDAMSMAFSEGKKTGDEIAAVILEPIQGEGGVILPPQGYLTEVRKLCDEFGALMILDEVQTGMGRTGKMFACEHENVQPDILCLAKALGGGVMPIGATIATEEVFSVLFDNPFLHTTTFGGNPLACAAALATINVLLEQNLPAQAEQKGDTLLDGFRQLAREYPNLVHEARGKGMLMAIEFVDNETGYRFASEMFRQRVLVAGTLNNAKTIRIEPPLTLTIELCEQVLKSARNALAAMQVSVEEV.

Residues 150–151 (GT) and Gln274 each bind pyridoxal 5'-phosphate. Lys300 is subject to N6-(pyridoxal phosphate)lysine. Thr332 contributes to the pyridoxal 5'-phosphate binding site.

Belongs to the class-III pyridoxal-phosphate-dependent aminotransferase family. Putrescine aminotransferase subfamily. Pyridoxal 5'-phosphate is required as a cofactor.

It catalyses the reaction an alkane-alpha,omega-diamine + 2-oxoglutarate = an omega-aminoaldehyde + L-glutamate. It carries out the reaction putrescine + 2-oxoglutarate = 1-pyrroline + L-glutamate + H2O. The catalysed reaction is cadaverine + 2-oxoglutarate = 5-aminopentanal + L-glutamate. It participates in amine and polyamine degradation; putrescine degradation; 4-aminobutanal from putrescine (transaminase route): step 1/1. Catalyzes the aminotransferase reaction from putrescine to 2-oxoglutarate, leading to glutamate and 4-aminobutanal, which spontaneously cyclizes to form 1-pyrroline. This is the first step in one of two pathways for putrescine degradation, where putrescine is converted into 4-aminobutanoate (gamma-aminobutyrate or GABA) via 4-aminobutanal. Also functions as a cadaverine transaminase in a a L-lysine degradation pathway to succinate that proceeds via cadaverine, glutarate and L-2-hydroxyglutarate. This chain is Putrescine aminotransferase, found in Salmonella heidelberg (strain SL476).